The chain runs to 297 residues: Phosphatidylserine decarboxylase proenzyme (297 aa).

Residues Asp-100, His-157, and Ser-263 each act as charge relay system; for autoendoproteolytic cleavage activity in the active site. The Schiff-base intermediate with substrate; via pyruvic acid; for decarboxylase activity role is filled by Ser-263. Pyruvic acid (Ser); by autocatalysis is present on Ser-263.

This sequence belongs to the phosphatidylserine decarboxylase family. PSD-B subfamily. Prokaryotic type I sub-subfamily. In terms of assembly, heterodimer of a large membrane-associated beta subunit and a small pyruvoyl-containing alpha subunit. Pyruvate serves as cofactor. Post-translationally, is synthesized initially as an inactive proenzyme. Formation of the active enzyme involves a self-maturation process in which the active site pyruvoyl group is generated from an internal serine residue via an autocatalytic post-translational modification. Two non-identical subunits are generated from the proenzyme in this reaction, and the pyruvate is formed at the N-terminus of the alpha chain, which is derived from the carboxyl end of the proenzyme. The autoendoproteolytic cleavage occurs by a canonical serine protease mechanism, in which the side chain hydroxyl group of the serine supplies its oxygen atom to form the C-terminus of the beta chain, while the remainder of the serine residue undergoes an oxidative deamination to produce ammonia and the pyruvoyl prosthetic group on the alpha chain. During this reaction, the Ser that is part of the protease active site of the proenzyme becomes the pyruvoyl prosthetic group, which constitutes an essential element of the active site of the mature decarboxylase.

The protein resides in the cell membrane. The catalysed reaction is a 1,2-diacyl-sn-glycero-3-phospho-L-serine + H(+) = a 1,2-diacyl-sn-glycero-3-phosphoethanolamine + CO2. It participates in phospholipid metabolism; phosphatidylethanolamine biosynthesis; phosphatidylethanolamine from CDP-diacylglycerol: step 2/2. Functionally, catalyzes the formation of phosphatidylethanolamine (PtdEtn) from phosphatidylserine (PtdSer). In Actinobacillus pleuropneumoniae serotype 5b (strain L20), this protein is Phosphatidylserine decarboxylase proenzyme.